Here is a 219-residue protein sequence, read N- to C-terminus: Charged multivesicular body protein 5 (219 aa).

Basic residues predominate over residues 1–10 (MNRLFGKAKP). The tract at residues 1 to 21 (MNRLFGKAKPKAPPPSLTDCI) is disordered. Lys7 carries the (Microbial infection) N6-stearoyl lysine lipid modification. The stretch at 26 to 179 (SRAESIDKKI…LGDELLADED (154 aa)) forms a coiled coil. Ser86 is modified (phosphoserine). The tract at residues 121-158 (KQVKIDQIEDLQDQLEDMMEDANEIQEALSRSYGTPEL) is interaction with VTA1. The interval 188–219 (SAPAIPEGVPTDTKNKDGVLVDEFGLPQIPAS) is disordered.

This sequence belongs to the SNF7 family. Probable peripherally associated component of the endosomal sorting required for transport complex III (ESCRT-III). ESCRT-III components are thought to multimerize to form a flat lattice on the perimeter membrane of the endosome. Several assembly forms of ESCRT-III may exist that interact and act sequentially. Interacts with VTA1; the interaction involves soluble CHMP5. Interacts with CHMP2A. Interacts with NOD2. Interacts with BROX. In terms of processing, (Microbial infection) Stearoylated By S.flexneri N-epsilon-fatty acyltransferase IcsB, promoting S.flexneri evasion of autophagy. Post-translationally, ISGylated. Isgylation inhibits its interaction with VTA1.

The protein localises to the cytoplasm. Its subcellular location is the cytosol. The protein resides in the endosome membrane. It is found in the midbody. In terms of biological role, probable peripherally associated component of the endosomal sorting required for transport complex III (ESCRT-III) which is involved in multivesicular bodies (MVBs) formation and sorting of endosomal cargo proteins into MVBs. MVBs contain intraluminal vesicles (ILVs) that are generated by invagination and scission from the limiting membrane of the endosome and mostly are delivered to lysosomes enabling degradation of membrane proteins, such as stimulated growth factor receptors, lysosomal enzymes and lipids. The MVB pathway appears to require the sequential function of ESCRT-O, -I,-II and -III complexes. ESCRT-III proteins mostly dissociate from the invaginating membrane before the ILV is released. The ESCRT machinery also functions in topologically equivalent membrane fission events, such as the terminal stages of cytokinesis and the budding of enveloped viruses (HIV-1 and other lentiviruses). ESCRT-III proteins are believed to mediate the necessary vesicle extrusion and/or membrane fission activities, possibly in conjunction with the AAA ATPase VPS4. Involved in HIV-1 p6- and p9-dependent virus release. This is Charged multivesicular body protein 5 (CHMP5) from Homo sapiens (Human).